Reading from the N-terminus, the 607-residue chain is ATP-dependent RNA helicase dbp9 (607 aa).

The Q motif motif lies at 24-52 (ATFASLGLDARLLQGIAKQNFQSPTLVQS). The 178-residue stretch at 55-232 (IPLTLEGRDI…GLFCRNPEVL (178 aa)) folds into the Helicase ATP-binding domain. 68–75 (AKTGSGKT) provides a ligand contact to ATP. The DEAD box motif lies at 180 to 183 (DEAD). Residues 243–475 (GVSQFVVKCA…EVKPYNFDMK (233 aa)) form the Helicase C-terminal domain. 2 disordered regions span residues 332–380 (VLGD…GKKD) and 580–607 (ARAA…KSRK). A compositionally biased stretch (acidic residues) spans 334–352 (GDEDEPKPEETEEVEADDA). Positions 353 to 368 (SGEKEDAKDAKKETKQ) are enriched in basic and acidic residues. Residues 580–592 (ARAANKAKGRGKG) show a composition bias toward basic residues.

This sequence belongs to the DEAD box helicase family. DDX56/DBP9 subfamily.

It is found in the nucleus. Its subcellular location is the nucleolus. The enzyme catalyses ATP + H2O = ADP + phosphate + H(+). Functionally, ATP-binding RNA helicase involved in the biogenesis of 60S ribosomal subunits and is required for the normal formation of 25S and 5.8S rRNAs. The chain is ATP-dependent RNA helicase dbp9 (dbp9) from Sclerotinia sclerotiorum (strain ATCC 18683 / 1980 / Ss-1) (White mold).